The chain runs to 89 residues: Myrmicitoxin(1)-Pr2c (89 aa).

The first 23 residues, 1-23 (MEIPKLLYIAVIAIGLSGSLTCA), serve as a signal peptide directing secretion. Positions 24–61 (TPLANPWADPEAEANPKAKATAEATAEAIAEALAEPEP) are excised as a propeptide. Residue Asn88 is modified to Asparagine amide.

This sequence belongs to the formicidae venom clade 1 family. As to expression, expressed by the venom gland.

It is found in the secreted. Its function is as follows. Vertebrate-selective toxin that causes pain by targeting voltage-gated sodium channels. The sequence is that of Myrmicitoxin(1)-Pr2c from Pogonomyrmex rugosus (Desert harvester ant).